Here is a 445-residue protein sequence, read N- to C-terminus: 2-oxoisovalerate dehydrogenase subunit alpha, mitochondrial (445 aa).

The N-terminal 45 residues, 1–45 (MAVAIAAARVWRPNRGLSQAALLLLWRPGARGLARSHPHRQQQQF), are a transit peptide targeting the mitochondrion. The thiamine diphosphate site is built by Y158 and R159. S206 is a binding site for K(+). S207 contacts thiamine diphosphate. Residues P208, T211, and Q212 each contribute to the K(+) site. E238 is a binding site for Mg(2+). Residues G239, A240, and R265 each contribute to the thiamine diphosphate site. 2 residues coordinate Mg(2+): N267 and Y269. A thiamine diphosphate-binding site is contributed by H336. S337 carries the phosphoserine; by BCKDK modification. The residue at position 338 (T338) is a Phosphothreonine. Residues S339 and S347 each carry the phosphoserine modification. The residue at position 356 (K356) is an N6-acetyllysine; alternate. K356 carries the N6-succinyllysine; alternate modification. Position 380 is an N6-succinyllysine (K380).

The protein belongs to the BCKDHA family. In terms of assembly, heterotetramer of 2 alpha/BCKDHA and 2 beta chains/BCKDHB that forms the branched-chain alpha-keto acid decarboxylase (E1) component of the BCKD complex. The branched-chain alpha-ketoacid dehydrogenase is a large complex composed of three major building blocks E1, E2 and E3. It is organized around E2, a 24-meric cubic core composed of DBT, to which are associated 6 to 12 copies of E1, and approximately 6 copies of the dehydrogenase E3, a DLD dimer. Interacts with PPM1K. Requires thiamine diphosphate as cofactor. Mg(2+) is required as a cofactor. Phosphorylated at Ser-337 by BCKDK and dephosphorylated by protein phosphatase PPM1K.

Its subcellular location is the mitochondrion matrix. The catalysed reaction is N(6)-[(R)-lipoyl]-L-lysyl-[protein] + 3-methyl-2-oxobutanoate + H(+) = N(6)-[(R)-S(8)-2-methylpropanoyldihydrolipoyl]-L-lysyl-[protein] + CO2. Its function is as follows. Together with BCKDHB forms the heterotetrameric E1 subunit of the mitochondrial branched-chain alpha-ketoacid dehydrogenase (BCKD) complex. The BCKD complex catalyzes the multi-step oxidative decarboxylation of alpha-ketoacids derived from the branched-chain amino-acids valine, leucine and isoleucine producing CO2 and acyl-CoA which is subsequently utilized to produce energy. The E1 subunit catalyzes the first step with the decarboxylation of the alpha-ketoacid forming an enzyme-product intermediate. A reductive acylation mediated by the lipoylamide cofactor of E2 extracts the acyl group from the E1 active site for the next step of the reaction. This chain is 2-oxoisovalerate dehydrogenase subunit alpha, mitochondrial (BCKDHA), found in Macaca fascicularis (Crab-eating macaque).